Reading from the N-terminus, the 1058-residue chain is Kinesin-like protein KIN-5D (1058 aa).

The disordered stretch occupies residues 1-43; sequence MDSIQQRRGGIVSLSPAQTPRSSDKSARESRSSESNSTNRNDK. The span at 22-32 shows a compositional bias: basic and acidic residues; sequence SSDKSARESRS. In terms of domain architecture, Kinesin motor spans 48–390; the sequence is NVQVILRCRP…LDYAHRAKNI (343 aa). Residue 134-141 coordinates ATP; that stretch reads GQTGTGKT. Residues 438–517 adopt a coiled-coil conformation; sequence QEEAEKKAMA…QANATIKEKE (80 aa).

It belongs to the TRAFAC class myosin-kinesin ATPase superfamily. Kinesin family. KIN-5/BimC subfamily.

Its subcellular location is the cytoplasm. The protein localises to the cytoskeleton. It is found in the spindle. Its function is as follows. Responsible for microtubule translocation. May be important for the organization of phragmoplast-specific arrays of microtubules. Plays an essential role in stabilizing the mitotic spindle. Required during mitotic cytokinesis. The chain is Kinesin-like protein KIN-5D from Arabidopsis thaliana (Mouse-ear cress).